Reading from the N-terminus, the 143-residue chain is Transcriptional regulator MraZ (143 aa).

2 SpoVT-AbrB domains span residues 5–47 and 76–119; these read EYHH…SMEE and AMES…AKER.

Belongs to the MraZ family. In terms of assembly, forms oligomers.

Its subcellular location is the cytoplasm. It is found in the nucleoid. The polypeptide is Transcriptional regulator MraZ (Lactobacillus helveticus (strain DPC 4571)).